The chain runs to 251 residues: Ubiquinone/menaquinone biosynthesis C-methyltransferase UbiE (251 aa).

Residues Thr74, Asp95, and 123–124 contribute to the S-adenosyl-L-methionine site; that span reads NA.

Belongs to the class I-like SAM-binding methyltransferase superfamily. MenG/UbiE family.

It carries out the reaction a 2-demethylmenaquinol + S-adenosyl-L-methionine = a menaquinol + S-adenosyl-L-homocysteine + H(+). The enzyme catalyses a 2-methoxy-6-(all-trans-polyprenyl)benzene-1,4-diol + S-adenosyl-L-methionine = a 5-methoxy-2-methyl-3-(all-trans-polyprenyl)benzene-1,4-diol + S-adenosyl-L-homocysteine + H(+). It functions in the pathway quinol/quinone metabolism; menaquinone biosynthesis; menaquinol from 1,4-dihydroxy-2-naphthoate: step 2/2. Its pathway is cofactor biosynthesis; ubiquinone biosynthesis. In terms of biological role, methyltransferase required for the conversion of demethylmenaquinol (DMKH2) to menaquinol (MKH2) and the conversion of 2-polyprenyl-6-methoxy-1,4-benzoquinol (DDMQH2) to 2-polyprenyl-3-methyl-6-methoxy-1,4-benzoquinol (DMQH2). This chain is Ubiquinone/menaquinone biosynthesis C-methyltransferase UbiE, found in Psychromonas ingrahamii (strain DSM 17664 / CCUG 51855 / 37).